Here is a 566-residue protein sequence, read N- to C-terminus: F-box/WD repeat-containing protein 5 (566 aa).

Positions 3-49 (EGGTPLLPDSLVYQIFLSLGPADVLAAGLVCRQWQAVSRDEFLWREQ) constitute an F-box domain. 4 WD repeats span residues 83–125 (VEVQ…DLTI), 126–178 (SLLH…LDSF), 179–238 (ALLS…VKRL), and 239–281 (FKIQ…RIFD). The residue at position 151 (serine 151) is a Phosphoserine; by PLK4. Position 284 is a phosphoserine (serine 284). The short motif at 303 to 311 (RHFLDRVLE) is the D-box element. WD repeat units follow at residues 394-447 (ALDH…DLLV), 458-501 (RALR…RHYN), and 502-539 (ICLARLRHEDVVNSVVFSPQEQELLLTASDDATIKAWR).

This sequence belongs to the FBXW5 family. In terms of assembly, part of the SCF (SKP1-CUL1-F-box) E3 ubiquitin-protein ligase complex SCF(FBXW5) composed of CUL1, SKP1, RBX1 and FBXW5. Component of the DCX(FBXW5) E3 ubiquitin ligase complex, at least composed of (CUL4A or CUL4B), DDB1, FBXW5 and RBX1. Interacts with CDC20, EPS8, TSC1, TSC2 and SASS6. Interacts with TNFAIP8L1; TNFAIP8L1 competes with TSC2 to bind FBXW5 increasing TSC2 stability by preventing its ubiquitination. Phosphorylated at Ser-151 by PLK4 during the G1/S transition, leading to inhibit its ability to ubiquitinate SASS6. In terms of processing, ubiquitinated and degraded by the APC/C complex during mitosis and G1 phase.

Its subcellular location is the cytoplasm. The protein operates within protein modification; protein ubiquitination. Substrate recognition component of both SCF (SKP1-CUL1-F-box protein) and DCX (DDB1-CUL4-X-box) E3 ubiquitin-protein ligase complexes. Substrate recognition component of the SCF(FBXW5) E3 ubiquitin-protein ligase complex which mediates the ubiquitination and subsequent proteasomal degradation of SASS6 during S phase, leading to prevent centriole reduplication. The SCF(FBXW5) complex also mediates ubiquitination and degradation of actin-regulator EPS8 during G2 phase, leading to the transient degradation of EPS8 and subsequent cell shape changes required to allow mitotic progression. Substrate-specific adapter of the DCX(FBXW5) E3 ubiquitin-protein ligase complex which mediates the polyubiquitination and subsequent degradation of TSC2. May also act as a negative regulator of MAP3K7/TAK1 signaling in the interleukin-1B (IL1B) signaling pathway. The protein is F-box/WD repeat-containing protein 5 (FBXW5) of Homo sapiens (Human).